The following is a 458-amino-acid chain: ATP synthase subunit beta (458 aa).

148-155 (GGAGVGKT) serves as a coordination point for ATP.

The protein belongs to the ATPase alpha/beta chains family. As to quaternary structure, F-type ATPases have 2 components, CF(1) - the catalytic core - and CF(0) - the membrane proton channel. CF(1) has five subunits: alpha(3), beta(3), gamma(1), delta(1), epsilon(1). CF(0) has three main subunits: a(1), b(2) and c(9-12). The alpha and beta chains form an alternating ring which encloses part of the gamma chain. CF(1) is attached to CF(0) by a central stalk formed by the gamma and epsilon chains, while a peripheral stalk is formed by the delta and b chains.

The protein localises to the cell inner membrane. The enzyme catalyses ATP + H2O + 4 H(+)(in) = ADP + phosphate + 5 H(+)(out). Functionally, produces ATP from ADP in the presence of a proton gradient across the membrane. The catalytic sites are hosted primarily by the beta subunits. This chain is ATP synthase subunit beta, found in Shewanella pealeana (strain ATCC 700345 / ANG-SQ1).